Consider the following 79-residue polypeptide: Sec-independent protein translocase protein TatA (79 aa).

Residues 1 to 21 (MGSLSIWHWIVVIAVVLLLFG) form a helical membrane-spanning segment. Residues 43–60 (LQDDEKTAEKPDPVKSID) are compositionally biased toward basic and acidic residues. Residues 43-79 (LQDDEKTAEKPDPVKSIDHNAPTAAAPTRTDVGSKAV) are disordered.

This sequence belongs to the TatA/E family. The Tat system comprises two distinct complexes: a TatABC complex, containing multiple copies of TatA, TatB and TatC subunits, and a separate TatA complex, containing only TatA subunits. Substrates initially bind to the TatABC complex, which probably triggers association of the separate TatA complex to form the active translocon.

Its subcellular location is the cell inner membrane. Part of the twin-arginine translocation (Tat) system that transports large folded proteins containing a characteristic twin-arginine motif in their signal peptide across membranes. TatA could form the protein-conducting channel of the Tat system. The sequence is that of Sec-independent protein translocase protein TatA from Rhodopseudomonas palustris (strain BisB5).